The following is a 146-amino-acid chain: Large ribosomal subunit protein uL15 (146 aa).

Residues 1 to 54 are disordered; it reads MKLHELKPAAGSRKAPKRVGRGTGSGLGRNAGKGEKGQNARSGGGVRPGFEGGQ. 2 stretches are compositionally biased toward gly residues: residues 21–31 and 42–52; these read RGTGSGLGRNA and SGGGVRPGFEG.

This sequence belongs to the universal ribosomal protein uL15 family. In terms of assembly, part of the 50S ribosomal subunit.

Functionally, binds to the 23S rRNA. This Clostridium acetobutylicum (strain ATCC 824 / DSM 792 / JCM 1419 / IAM 19013 / LMG 5710 / NBRC 13948 / NRRL B-527 / VKM B-1787 / 2291 / W) protein is Large ribosomal subunit protein uL15.